Reading from the N-terminus, the 354-residue chain is C-C chemokine receptor type 5 (354 aa).

Residues 1-32 lie on the Extracellular side of the membrane; it reads MDFQGSVPTYSYDIDYGMSAPCQKINVKQIAA. O-linked (GalNAc...) serine glycosylation is present at Ser-6. Sulfotyrosine is present on residues Tyr-10, Tyr-12, and Tyr-16. 2 disulfide bridges follow: Cys-22-Cys-271 and Cys-103-Cys-180. A helical transmembrane segment spans residues 33–60; sequence QLLPPLYSLVFIFGFVGNMMVFLILISC. At 61 to 70 the chain is on the cytoplasmic side; that stretch reads KKLKSVTDIY. A helical membrane pass occupies residues 71-91; it reads LLNLAISDLLFLLTLPFWAHY. The Extracellular segment spans residues 92-104; it reads AANEWVFGNIMCK. Residues 105–126 form a helical membrane-spanning segment; sequence VFTGLYHIGYFGGIFFIILLTI. Over 127 to 143 the chain is Cytoplasmic; sequence DRYLAIVHAVFALKVRT. Residues 144 to 168 traverse the membrane as a helical segment; sequence VNFGVITSVVTWAVAVFASLPEIIF. The Extracellular segment spans residues 169–200; the sequence is TRSQKEGFHYTCSPHFPHTQYHFWKSFQTLKM. The helical transmembrane segment at 201–220 threads the bilayer; that stretch reads VILSLILPLLVMVICYSGIL. At 221 to 237 the chain is on the cytoplasmic side; the sequence is HTLFRCRNEKKRHRAVR. A helical membrane pass occupies residues 238-262; that stretch reads LIFAIMIVYFLFWTPYNIVLLLTTF. The Extracellular portion of the chain corresponds to 263–279; it reads QEFFGLNNCSSSNRLDQ. A helical transmembrane segment spans residues 280-303; that stretch reads AMQATETLGMTHCCLNPVIYAFVG. Topologically, residues 304–354 are cytoplasmic; that stretch reads EKFRSYLSVFFRKHMVKRFCKRCSIFQQDNPDRASSVYTRSTGEHEVSTGL. S-palmitoyl cysteine attachment occurs at residues Cys-323 and Cys-326. Ser-338, Ser-339, Ser-344, and Ser-351 each carry phosphoserine; by BARK1.

It belongs to the G-protein coupled receptor 1 family. Interacts with PRAF2. Efficient ligand binding to CCL3/MIP-1alpha and CCL4/MIP-1beta requires sulfation, O-glycosylation and sialic acid modifications. Glycosylation on Ser-6 is required for efficient binding of CCL4. Interacts with GRK2. Interacts with ARRB1 and ARRB2. Interacts with CNIH4. Interacts with S100A4; this interaction stimulates T-lymphocyte chemotaxis. Sulfated on at least 2 of the N-terminal tyrosines. Sulfation is required for efficient binding of the chemokines, CCL3 and CCL4. In terms of processing, O-glycosylated, but not N-glycosylated. Ser-6 appears to be the major site. Also sialylated glycans present which contribute to chemokine binding. Post-translationally, palmitoylation in the C-terminal is important for cell surface expression. Phosphorylation on serine residues in the C-terminal is stimulated by binding CC chemokines especially by APO-RANTES.

It localises to the cell membrane. In terms of biological role, receptor for a number of inflammatory CC-chemokines including CCL3/MIP-1-alpha, CCL4/MIP-1-beta and RANTES and subsequently transduces a signal by increasing the intracellular calcium ion level. May play a role in the control of granulocytic lineage proliferation or differentiation. Participates in T-lymphocyte migration to the infection site by acting as a chemotactic receptor. The protein is C-C chemokine receptor type 5 (Ccr5) of Mus musculus (Mouse).